Here is a 390-residue protein sequence, read N- to C-terminus: Elongation factor Ts, mitochondrial (390 aa).

The protein belongs to the EF-Ts family.

The protein resides in the mitochondrion. Its function is as follows. Associates with the EF-Tu.GDP complex and induces the exchange of GDP to GTP. It remains bound to the aminoacyl-tRNA.EF-Tu.GTP complex up to the GTP hydrolysis stage on the ribosome. The protein is Elongation factor Ts, mitochondrial of Plasmodium vivax (strain Salvador I).